A 771-amino-acid chain; its full sequence is Rho guanine nucleotide exchange factor 6 (771 aa).

The Calponin-homology (CH) domain maps to 1-111 (MNPEERLVTW…TLLAVNKATE (111 aa)). A disordered region spans residues 115–157 (SERPCGRSSSLSAATSSQTNPQVAVPSTAPEQHSEEKAEMTEN). Residues 122–131 (SSSLSAATSS) show a composition bias toward low complexity. Ser-126 is modified (phosphoserine). At Thr-133 the chain carries Phosphothreonine. An SH3 domain is found at 159-218 (SHQLIVKARFNFKQTNEDELSVCKGDIIYVTRVEEGGWWEGTLNGRTGWFPSNYVREIKP). A Phosphoserine modification is found at Ser-224. Positions 240-420 (YYTVVLQNIL…KTLMGQCQDL (181 aa)) constitute a DH domain. Residues 442–547 (DIKTLGNVIF…WMEQLNRLTK (106 aa)) form the PH domain. The residue at position 487 (Ser-487) is a Phosphoserine. Residues 556–572 (SKTSSSSCSTHSSFSST) show a composition bias toward low complexity. The disordered stretch occupies residues 556–580 (SKTSSSSCSTHSSFSSTGQPRGPLE). Phosphoserine is present on residues Ser-639 and Ser-679.

Interacts with PAK kinases through the SH3 domain. Interacts with GIT1. Component of cytoplasmic complexes, which also contain PXN, GIT1 and PAK1. Interacts with BIN2. Identified in a complex with BIN2 and GIT2. Interacts with PARVB. Interacts with PARVG; the guanine nucleotide exchange factor activity of ARHGEF6 is essential for PARVG-induced enhancement of cell spreading. Detected in adult heart, spleen, lung, skeletal muscle, kidney and testis. Detected throughout embryogenesis.

It localises to the cell projection. The protein resides in the lamellipodium. In terms of biological role, acts as a RAC1 guanine nucleotide exchange factor (GEF). The sequence is that of Rho guanine nucleotide exchange factor 6 (Arhgef6) from Mus musculus (Mouse).